Reading from the N-terminus, the 111-residue chain is Cytochrome c6 (111 aa).

Positions 1-25 (MKRLLSLIFLVFVFFAVMLTPPALA) are cleaved as a signal peptide. Heme c is bound by residues C39, C42, H43, and M83.

It belongs to the cytochrome c family. PetJ subfamily. In terms of assembly, monomer. Post-translationally, binds 1 heme c group covalently per subunit.

The protein localises to the cellular thylakoid lumen. Functions as an electron carrier between membrane-bound cytochrome b6-f and photosystem I in oxygenic photosynthesis. The chain is Cytochrome c6 from Rippkaea orientalis (strain PCC 8801 / RF-1) (Cyanothece sp. (strain PCC 8801)).